Here is a 676-residue protein sequence, read N- to C-terminus: GRB2-associated-binding protein 2 (676 aa).

At Ser-2 the chain carries Phosphoserine. The PH domain occupies 6 to 117; sequence DVVCTGWLRK…WVQSICQICG (112 aa). The disordered stretch occupies residues 127–178; that stretch reads SLRNVSSAGHGPRSSPAELSSSSQHLLRERKSSAPSHSSQPTLFTFEPPVSN. Phosphoserine is present on residues Ser-133, Ser-140, Ser-141, Ser-148, Ser-149, Ser-159, Ser-164, Ser-210, Ser-218, Ser-223, and Ser-264. A compositionally biased stretch (low complexity) spans 140-149; the sequence is SSPAELSSSS. Residues 159–169 are compositionally biased toward polar residues; it reads SAPSHSSQPTL. Thr-265 bears the Phosphothreonine mark. Tyr-266 is modified (phosphotyrosine). The residue at position 278 (Thr-278) is a Phosphothreonine. A phosphoserine mark is found at Ser-281 and Ser-285. A Phosphothreonine modification is found at Thr-287. Tyr-293 is modified (phosphotyrosine). At Thr-331 the chain carries Phosphothreonine. The disordered stretch occupies residues 341–430; the sequence is VATPGDSAIA…RSAESMSDGV (90 aa). The SH3-binding motif lies at 351–358; it reads PPPRPPKP. Ser-368 is subject to Phosphoserine. 2 positions are modified to phosphothreonine: Thr-385 and Thr-391. Ser-405 carries the post-translational modification Phosphoserine. Phosphothreonine is present on Thr-408. Phosphoserine is present on residues Ser-422 and Ser-425. Tyr-452 bears the Phosphotyrosine mark. Ser-480 is modified (phosphoserine). The disordered stretch occupies residues 492–531; sequence PSTTLPVHRGPSRGSEIQPPPVNRNLKPDRKAKPTPLDLR. Residues 510–519 carry the SH3-binding motif; the sequence is PPPVNRNLKP. The residue at position 543 (Ser-543) is a Phosphoserine. 2 stretches are compositionally biased toward polar residues: residues 556-577 and 589-611; these read FNSS…STDS and NPVS…STGS. Disordered stretches follow at residues 556–643 and 656–676; these read FNSS…KVDY and NTMQ…GAKL. Residues Ser-622 and Ser-623 each carry the phosphoserine modification. The residue at position 643 (Tyr-643) is a Phosphotyrosine. Positions 656–670 are enriched in polar residues; that stretch reads NTMQEWTDVRQSSEP.

Belongs to the GAB family. Part of a complex composed of EEIG1, TNFRSF11A/RANK, PLCG2, GAB2, TEC and BTK; complex formation increases in the presence of TNFSF11/RANKL. Interacts with SHC1; may mediate interaction with receptors. Interacts with SYK. Interacts with PI-3 kinase. Interacts with GRB2 (via SH3 2 domain). Interacts (phosphorylated) with PTPN11. Interacts with TNFRSF11A (via cytoplasmic domain). Interacts (phosphorylated) with 14-3-3 family proteins SFN, YWHAB, YWHAE, YWHAG, YWHAH, YWHAQ and YWHAZ; prevents interaction with GRB2 and attenuates GAB2 signaling. Interacts with HCK. Post-translationally, phosphorylated on tyrosine residue(s) by the thrombopoietin receptor (TPOR), stem cell factor receptor (SCFR), and T-cell and B-cell antigen receptors, gp130, IL-2R and IL-3R. Phosphorylated upon stimulation of TNFRSF11A/RANK by TNFSF11/RANKL. Phosphorylated upon EGF stimulation. Phosphorylated on tyrosine residues by HCK upon IL6 signaling. In terms of processing, dephosphorylated by PTPN11.

It localises to the cytoplasm. Its subcellular location is the cell membrane. The protein resides in the membrane raft. Its function is as follows. Adapter protein which acts downstream of several membrane receptors including cytokine, antigen, hormone, cell matrix and growth factor receptors to regulate multiple signaling pathways. Regulates osteoclast differentiation mediating the TNFRSF11A/RANK signaling. In allergic response, it plays a role in mast cells activation and degranulation through PI-3-kinase regulation. Also involved in the regulation of cell proliferation and hematopoiesis. This chain is GRB2-associated-binding protein 2 (GAB2), found in Homo sapiens (Human).